A 276-amino-acid chain; its full sequence is Extracellular metalloprotease VDBG_07883 (276 aa).

The first 17 residues, 1–17 (MQSKFLWIAAASAATAA), serve as a signal peptide directing secretion. N-linked (GlcNAc...) asparagine glycosylation is found at Asn70 and Asn102. Residue His191 participates in Zn(2+) binding. Residue Glu192 is part of the active site. His195 provides a ligand contact to Zn(2+). N-linked (GlcNAc...) asparagine glycosylation occurs at Asn222. The cysteines at positions 227 and 254 are disulfide-linked.

It belongs to the peptidase M43B family.

It localises to the secreted. In terms of biological role, secreted metalloproteinase that allows assimilation of proteinaceous substrates. This is Extracellular metalloprotease VDBG_07883 from Verticillium alfalfae (strain VaMs.102 / ATCC MYA-4576 / FGSC 10136) (Verticillium wilt of alfalfa).